The sequence spans 436 residues: Anhydro-N-acetylmuramic acid kinase (436 aa).

Glycine 32–aspartate 39 serves as a coordination point for ATP.

The protein belongs to the anhydro-N-acetylmuramic acid kinase family.

It catalyses the reaction 1,6-anhydro-N-acetyl-beta-muramate + ATP + H2O = N-acetyl-D-muramate 6-phosphate + ADP + H(+). It participates in amino-sugar metabolism; 1,6-anhydro-N-acetylmuramate degradation. The protein operates within cell wall biogenesis; peptidoglycan recycling. Functionally, catalyzes the specific phosphorylation of 1,6-anhydro-N-acetylmuramic acid (anhMurNAc) with the simultaneous cleavage of the 1,6-anhydro ring, generating MurNAc-6-P. Is required for the utilization of anhMurNAc either imported from the medium or derived from its own cell wall murein, and thus plays a role in cell wall recycling. This chain is Anhydro-N-acetylmuramic acid kinase, found in Psychrobacter arcticus (strain DSM 17307 / VKM B-2377 / 273-4).